A 566-amino-acid polypeptide reads, in one-letter code: 15-cis-phytoene desaturase, chloroplastic/chromoplastic (566 aa).

Residues 1-86 constitute a chloroplast and chromoplast transit peptide; the sequence is MVVFGNVSAA…ASLSASFRSA (86 aa). Residues Ala103, 122–123, Lys130, 147–148, and Tyr153 contribute to the FAD site; these read EA and HI. Arg288 is a substrate binding site. Ile330 and Asp519 together coordinate FAD. Position 527 (Ala527) interacts with substrate. Met529 is a binding site for FAD.

Belongs to the carotenoid/retinoid oxidoreductase family. In terms of assembly, homotetramer. It depends on FAD as a cofactor.

It is found in the plastid. The protein resides in the chloroplast. Its subcellular location is the chromoplast. The protein localises to the membrane. It catalyses the reaction 2 a plastoquinone + 15-cis-phytoene = 9,9',15-tri-cis-zeta-carotene + 2 a plastoquinol. It participates in carotenoid biosynthesis; lycopene biosynthesis. Converts phytoene into zeta-carotene via the intermediary of phytofluene by the symmetrical introduction of two double bonds at the C-11 and C-11' positions of phytoene with a concomitant isomerization of two neighboring double bonds at the C9 and C9' positions from trans to cis. In Arabidopsis thaliana (Mouse-ear cress), this protein is 15-cis-phytoene desaturase, chloroplastic/chromoplastic (PDS).